The sequence spans 331 residues: Ferredoxin--NADP reductase (331 aa).

Positions 38, 46, 51, 91, 125, 282, and 323 each coordinate FAD.

It belongs to the ferredoxin--NADP reductase type 2 family. Homodimer. FAD serves as cofactor.

The catalysed reaction is 2 reduced [2Fe-2S]-[ferredoxin] + NADP(+) + H(+) = 2 oxidized [2Fe-2S]-[ferredoxin] + NADPH. The chain is Ferredoxin--NADP reductase from Deinococcus geothermalis (strain DSM 11300 / CIP 105573 / AG-3a).